The following is a 108-amino-acid chain: Transmembrane protein 213 (108 aa).

A signal peptide spans 1-27 (MKRLHLAPWTSLVLGLAFLSFHPVYLA). The Extracellular segment spans residues 28-71 (EASSGSNSTSTVHHPENLETLEQCPNVDFCPQAARCCHTGVDEY). Asn34 carries an N-linked (GlcNAc...) asparagine glycan. A helical membrane pass occupies residues 72–92 (GWIAAAVGWSLLFLTLILLCV). At 93 to 108 (DKLMKLTPDESKDLQA) the chain is on the cytoplasmic side.

It is found in the membrane. This is Transmembrane protein 213 (TMEM213) from Bos taurus (Bovine).